A 453-amino-acid chain; its full sequence is Tyrosine-protein phosphatase non-receptor type 18 (453 aa).

A Tyrosine-protein phosphatase domain is found at 26–291; sequence LAREFSDIKA…RFLYHTVAQL (266 aa). Residues Asp-197, 229–235, and Gln-276 each bind substrate; that span reads CSAGCGR. Cys-229 acts as the Phosphocysteine intermediate in catalysis. A phosphotyrosine mark is found at Tyr-381 and Tyr-419. Positions 384–453 are disordered; sequence VAPRAQRPVA…RDPPAEWTRV (70 aa). The span at 442 to 453 shows a compositional bias: basic and acidic residues; the sequence is GPRDPPAEWTRV.

It belongs to the protein-tyrosine phosphatase family. Non-receptor class 4 subfamily. As to quaternary structure, interacts with PSTPIP1. In terms of tissue distribution, highest expression in bone marrow. Also expressed in kidney, lung, ovary, spleen, thymus and lymph node.

It localises to the nucleus. The protein localises to the cytoplasm. The enzyme catalyses O-phospho-L-tyrosyl-[protein] + H2O = L-tyrosyl-[protein] + phosphate. Functionally, may be involved in growth and differentiation of hematopoietic cells. The chain is Tyrosine-protein phosphatase non-receptor type 18 (Ptpn18) from Mus musculus (Mouse).